The chain runs to 162 residues: 2-C-methyl-D-erythritol 2,4-cyclodiphosphate synthase (162 aa).

Residues Asp9 and His11 each coordinate a divalent metal cation. Residues 9–11 and 37–38 contribute to the 4-CDP-2-C-methyl-D-erythritol 2-phosphate site; these read DFH and HS. Residue His45 coordinates a divalent metal cation. 4-CDP-2-C-methyl-D-erythritol 2-phosphate is bound by residues 59 to 61, 64 to 68, 135 to 138, and Arg145; these read DIG, FPDTD, and TTSE.

The protein belongs to the IspF family. In terms of assembly, homotrimer. The cofactor is a divalent metal cation.

The catalysed reaction is 4-CDP-2-C-methyl-D-erythritol 2-phosphate = 2-C-methyl-D-erythritol 2,4-cyclic diphosphate + CMP. The protein operates within isoprenoid biosynthesis; isopentenyl diphosphate biosynthesis via DXP pathway; isopentenyl diphosphate from 1-deoxy-D-xylulose 5-phosphate: step 4/6. Its function is as follows. Involved in the biosynthesis of isopentenyl diphosphate (IPP) and dimethylallyl diphosphate (DMAPP), two major building blocks of isoprenoid compounds. Catalyzes the conversion of 4-diphosphocytidyl-2-C-methyl-D-erythritol 2-phosphate (CDP-ME2P) to 2-C-methyl-D-erythritol 2,4-cyclodiphosphate (ME-CPP) with a corresponding release of cytidine 5-monophosphate (CMP). The sequence is that of 2-C-methyl-D-erythritol 2,4-cyclodiphosphate synthase from Leptospira biflexa serovar Patoc (strain Patoc 1 / Ames).